The primary structure comprises 107 residues: Large ribosomal subunit protein uL24 (107 aa).

The protein belongs to the universal ribosomal protein uL24 family. In terms of assembly, part of the 50S ribosomal subunit.

In terms of biological role, one of two assembly initiator proteins, it binds directly to the 5'-end of the 23S rRNA, where it nucleates assembly of the 50S subunit. Functionally, one of the proteins that surrounds the polypeptide exit tunnel on the outside of the subunit. The polypeptide is Large ribosomal subunit protein uL24 (Nitratidesulfovibrio vulgaris (strain DSM 19637 / Miyazaki F) (Desulfovibrio vulgaris)).